The sequence spans 501 residues: Ribose import ATP-binding protein RbsA (501 aa).

ABC transporter domains follow at residues 6 to 242 (LQLS…VGRK) and 253 to 495 (VHGQ…VGKK). 38–45 (GENGAGKS) contacts ATP.

Belongs to the ABC transporter superfamily. Ribose importer (TC 3.A.1.2.1) family. As to quaternary structure, the complex is composed of an ATP-binding protein (RbsA), two transmembrane proteins (RbsC) and a solute-binding protein (RbsB).

The protein resides in the cell inner membrane. The enzyme catalyses D-ribose(out) + ATP + H2O = D-ribose(in) + ADP + phosphate + H(+). In terms of biological role, part of the ABC transporter complex RbsABC involved in ribose import. Responsible for energy coupling to the transport system. This chain is Ribose import ATP-binding protein RbsA, found in Vibrio vulnificus (strain YJ016).